The sequence spans 428 residues: Hemagglutinin-esterase (428 aa).

Positions 1-19 (MCIAMAPRTLLLLIXCQLV) are cleaved as a signal peptide. Residues 9–129 (TLLLLIXCQL…DNKRWMGNKA (121 aa)) are esterase domain 1. At 20–404 (FGFNEPLNIV…PVCIYDPLPV (385 aa)) the chain is on the virion surface side. Ser-42 acts as the Nucleophile in catalysis. Cys-46 and Cys-67 are oxidised to a cystine. 5 N-linked (GlcNAc...) asparagine; by host glycosylation sites follow: Asn-91, Asn-149, Asn-193, Asn-243, and Asn-313. Cys-115 and Cys-164 are disulfide-bonded. The tract at residues 130-278 (RFYARVYEKM…GNYKAVSLEY (149 aa)) is receptor binding. Intrachain disulfides connect Cys-199/Cys-288 and Cys-207/Cys-261. The segment at 279–392 (LLSLPSKAIC…HCPTAANIGY (114 aa)) is esterase domain 2. Cys-319 and Cys-324 are joined by a disulfide. N-linked (GlcNAc...) asparagine; by host glycans are attached at residues Asn-328 and Asn-332. Catalysis depends on charge relay system residues Asp-339 and His-342. Residues Asn-357 and Asn-371 are each glycosylated (N-linked (GlcNAc...) asparagine; by host). Cys-360 and Cys-384 are joined by a disulfide. A helical membrane pass occupies residues 405 to 425 (ILLGVLLGIAVLIIVFLNVLF). Topologically, residues 426–428 (YDG) are intravirion.

Belongs to the influenza type C/coronaviruses hemagglutinin-esterase family. In terms of assembly, homodimer; disulfide-linked. Forms a complex with the M protein in the pre-Golgi. Associates then with S-M complex to form a ternary complex S-M-HE. N-glycosylated in the RER. In terms of processing, N-glycosylated in the host RER.

The protein resides in the virion membrane. The protein localises to the host cell membrane. It catalyses the reaction N-acetyl-9-O-acetylneuraminate + H2O = N-acetylneuraminate + acetate + H(+). The enzyme catalyses N-acetyl-4-O-acetylneuraminate + H2O = N-acetylneuraminate + acetate + H(+). Its function is as follows. Structural protein that makes short spikes at the surface of the virus. Contains receptor binding and receptor-destroying activities. Mediates de-O-acetylation of N-acetyl-4-O-acetylneuraminic acid, which is probably the receptor determinant recognized by the virus on the surface of erythrocytes and susceptible cells. This receptor-destroying activity is important for virus release as it probably helps preventing self-aggregation and ensures the efficient spread of the progeny virus from cell to cell. May serve as a secondary viral attachment protein for initiating infection, the spike protein being the major one. May become a target for both the humoral and the cellular branches of the immune system. In Mus musculus (Mouse), this protein is Hemagglutinin-esterase.